Reading from the N-terminus, the 519-residue chain is T-box transcription factor TBX5 (519 aa).

The tract at residues M1–Q43 is disordered. The span at A17–Q28 shows a compositional bias: basic and acidic residues. Polar residues predominate over residues D29 to Q43. The T-box DNA-binding region spans L63–G238. Disordered stretches follow at residues E254–P312 and E335–A376. Polar residues predominate over residues T262–D303.

Monomer. Homodimer (via the T-box); binds DNA as homodimer.

The protein resides in the nucleus. It is found in the cytoplasm. Functionally, DNA-binding protein that regulates the transcription of several genes and is involved in heart development and limb pattern formation. May bind to the core DNA motif of promoters. This is T-box transcription factor TBX5 (tbx5) from Xenopus tropicalis (Western clawed frog).